Here is a 369-residue protein sequence, read N- to C-terminus: MAENSLLGKLDGLVSRFEEVGTLITDPAVIADMKRFVKLNKEYRDLEKIVGARSEYVKVLNGIEEAKALLESEQDPEMREMAREELDTCNERIPALEEEIKLLLVPADPQDDKNAIVEIRGGTGGDEAALFAGDLYRMYVKYCELKGWKISVSSFSEGSSGGFKEIIFTVSGEKVYGTLKYESGVHRVQRVPATETQGRVHTSAATVAVLPEADEFDVEINEGEIKWDTFRSGGAGGQNVNKVESGVRLRYVWKNPITGVSEEILIECTETRDQPKNKERALTRLRSFIYDKEHQKYLDDIASKRKTMVSTGDRSAKIRTYNYPQGRITDHRINYTIYNLSAFMDGEIQDCLDHLIVAENAERLKESEL.

Gln238 carries the N5-methylglutamine modification.

This sequence belongs to the prokaryotic/mitochondrial release factor family. Post-translationally, methylated by PrmC. Methylation increases the termination efficiency of RF1.

The protein resides in the cytoplasm. Its function is as follows. Peptide chain release factor 1 directs the termination of translation in response to the peptide chain termination codons UAG and UAA. The sequence is that of Peptide chain release factor 1 from Parabacteroides distasonis (strain ATCC 8503 / DSM 20701 / CIP 104284 / JCM 5825 / NCTC 11152).